Here is a 112-residue protein sequence, read N- to C-terminus: Large ribosomal subunit protein mL53 (112 aa).

The protein belongs to the mitochondrion-specific ribosomal protein mL53 family. As to quaternary structure, component of the mitochondrial ribosome large subunit (39S) which comprises a 16S rRNA and about 50 distinct proteins.

Its subcellular location is the mitochondrion. The sequence is that of Large ribosomal subunit protein mL53 (MRPL53) from Bos taurus (Bovine).